The chain runs to 680 residues: DNA ligase 1 (680 aa).

Residues 35–39 (DAEYD), 84–85 (SL), and D115 each bind NAD(+). Catalysis depends on K117, which acts as the N6-AMP-lysine intermediate. NAD(+) contacts are provided by R138, E175, K295, and K319. Zn(2+) contacts are provided by C413, C416, C431, and C436. The BRCT domain maps to 599 to 680 (REGSQLQGLK…FANLLKGLDR (82 aa)).

It belongs to the NAD-dependent DNA ligase family. LigA subfamily. Mg(2+) is required as a cofactor. It depends on Mn(2+) as a cofactor.

The enzyme catalyses NAD(+) + (deoxyribonucleotide)n-3'-hydroxyl + 5'-phospho-(deoxyribonucleotide)m = (deoxyribonucleotide)n+m + AMP + beta-nicotinamide D-nucleotide.. DNA ligase that catalyzes the formation of phosphodiester linkages between 5'-phosphoryl and 3'-hydroxyl groups in double-stranded DNA using NAD as a coenzyme and as the energy source for the reaction. It is essential for DNA replication and repair of damaged DNA. The chain is DNA ligase 1 from Nitratidesulfovibrio vulgaris (strain DP4) (Desulfovibrio vulgaris).